Consider the following 194-residue polypeptide: dTTP/UTP pyrophosphatase (194 aa).

Residue aspartate 76 is the Proton acceptor of the active site.

Belongs to the Maf family. YhdE subfamily. A divalent metal cation serves as cofactor.

The protein localises to the cytoplasm. The enzyme catalyses dTTP + H2O = dTMP + diphosphate + H(+). It catalyses the reaction UTP + H2O = UMP + diphosphate + H(+). Functionally, nucleoside triphosphate pyrophosphatase that hydrolyzes dTTP and UTP. May have a dual role in cell division arrest and in preventing the incorporation of modified nucleotides into cellular nucleic acids. This Shewanella oneidensis (strain ATCC 700550 / JCM 31522 / CIP 106686 / LMG 19005 / NCIMB 14063 / MR-1) protein is dTTP/UTP pyrophosphatase.